Reading from the N-terminus, the 600-residue chain is Elongation factor 4 (600 aa).

One can recognise a tr-type G domain in the interval 5-187 (KYIRNFSIVA…EIVEKVPAPE (183 aa)). Residues 17–22 (DHGKST) and 134–137 (NKVD) each bind GTP.

It belongs to the TRAFAC class translation factor GTPase superfamily. Classic translation factor GTPase family. LepA subfamily.

The protein localises to the cell membrane. It carries out the reaction GTP + H2O = GDP + phosphate + H(+). In terms of biological role, required for accurate and efficient protein synthesis under certain stress conditions. May act as a fidelity factor of the translation reaction, by catalyzing a one-codon backward translocation of tRNAs on improperly translocated ribosomes. Back-translocation proceeds from a post-translocation (POST) complex to a pre-translocation (PRE) complex, thus giving elongation factor G a second chance to translocate the tRNAs correctly. Binds to ribosomes in a GTP-dependent manner. The sequence is that of Elongation factor 4 from Clostridium perfringens (strain ATCC 13124 / DSM 756 / JCM 1290 / NCIMB 6125 / NCTC 8237 / Type A).